The chain runs to 177 residues: Peptidyl-tRNA hydrolase (177 aa).

Y18 contacts tRNA. H23 acts as the Proton acceptor in catalysis. The tRNA site is built by F65, N67, and N113.

Belongs to the PTH family. In terms of assembly, monomer.

It is found in the cytoplasm. It catalyses the reaction an N-acyl-L-alpha-aminoacyl-tRNA + H2O = an N-acyl-L-amino acid + a tRNA + H(+). Hydrolyzes ribosome-free peptidyl-tRNAs (with 1 or more amino acids incorporated), which drop off the ribosome during protein synthesis, or as a result of ribosome stalling. Its function is as follows. Catalyzes the release of premature peptidyl moieties from peptidyl-tRNA molecules trapped in stalled 50S ribosomal subunits, and thus maintains levels of free tRNAs and 50S ribosomes. This is Peptidyl-tRNA hydrolase from Corynebacterium efficiens (strain DSM 44549 / YS-314 / AJ 12310 / JCM 11189 / NBRC 100395).